A 728-amino-acid polypeptide reads, in one-letter code: Phosphoribosylformylglycinamidine synthase subunit PurL (728 aa).

His42 is a catalytic residue. ATP is bound by residues Tyr45 and Lys84. Residue Glu86 coordinates Mg(2+). Residues 87 to 90 (SHNH) and Arg109 each bind substrate. Residue His88 is the Proton acceptor of the active site. Asp110 lines the Mg(2+) pocket. A substrate-binding site is contributed by Gln237. A Mg(2+)-binding site is contributed by Asp265. Residue 309–311 (ESQ) coordinates substrate. Positions 491 and 528 each coordinate ATP. A Mg(2+)-binding site is contributed by Asn529. Residue Ser531 coordinates substrate.

The protein belongs to the FGAMS family. In terms of assembly, monomer. Part of the FGAM synthase complex composed of 1 PurL, 1 PurQ and 2 PurS subunits.

It is found in the cytoplasm. The catalysed reaction is N(2)-formyl-N(1)-(5-phospho-beta-D-ribosyl)glycinamide + L-glutamine + ATP + H2O = 2-formamido-N(1)-(5-O-phospho-beta-D-ribosyl)acetamidine + L-glutamate + ADP + phosphate + H(+). It participates in purine metabolism; IMP biosynthesis via de novo pathway; 5-amino-1-(5-phospho-D-ribosyl)imidazole from N(2)-formyl-N(1)-(5-phospho-D-ribosyl)glycinamide: step 1/2. Part of the phosphoribosylformylglycinamidine synthase complex involved in the purines biosynthetic pathway. Catalyzes the ATP-dependent conversion of formylglycinamide ribonucleotide (FGAR) and glutamine to yield formylglycinamidine ribonucleotide (FGAM) and glutamate. The FGAM synthase complex is composed of three subunits. PurQ produces an ammonia molecule by converting glutamine to glutamate. PurL transfers the ammonia molecule to FGAR to form FGAM in an ATP-dependent manner. PurS interacts with PurQ and PurL and is thought to assist in the transfer of the ammonia molecule from PurQ to PurL. The sequence is that of Phosphoribosylformylglycinamidine synthase subunit PurL from Campylobacter jejuni (strain RM1221).